The primary structure comprises 865 residues: Alanine--tRNA ligase (865 aa).

H554, H558, C656, and H660 together coordinate Zn(2+).

This sequence belongs to the class-II aminoacyl-tRNA synthetase family. Requires Zn(2+) as cofactor.

It is found in the cytoplasm. It carries out the reaction tRNA(Ala) + L-alanine + ATP = L-alanyl-tRNA(Ala) + AMP + diphosphate. In terms of biological role, catalyzes the attachment of alanine to tRNA(Ala) in a two-step reaction: alanine is first activated by ATP to form Ala-AMP and then transferred to the acceptor end of tRNA(Ala). Also edits incorrectly charged Ser-tRNA(Ala) and Gly-tRNA(Ala) via its editing domain. The polypeptide is Alanine--tRNA ligase (Francisella tularensis subsp. tularensis (strain WY96-3418)).